We begin with the raw amino-acid sequence, 660 residues long: Poly(A)-specific ribonuclease PARN (660 aa).

2 residues coordinate a divalent metal cation: aspartate 28 and glutamate 30. In terms of domain architecture, R3H spans 177–243; it reads REFIRSVEEK…ERFIQISKVD (67 aa). Positions 290 and 380 each coordinate a divalent metal cation. Residues serine 560 and serine 614 each carry the phosphoserine modification. Residues 606–660 form a disordered region; sequence ADEGGASVSPVAEEAELDEFSANQSQGKRSRKHKKRKSDASETTPPALFDVPQVW. The segment covering 633-642 has biased composition (basic residues); sequence KRSRKHKKRK. Serine 643 is modified (phosphoserine). Residue threonine 649 is modified to Phosphothreonine.

The protein belongs to the CAF1 family. The cofactor is a divalent metal cation.

It localises to the cytoplasm. Its subcellular location is the nucleus. It carries out the reaction Exonucleolytic cleavage of poly(A) to 5'-AMP.. 3'-exoribonuclease that has a preference for poly(A) tails of mRNAs, thereby efficiently degrading poly(A) tails. Exonucleolytic degradation of the poly(A) tail is often the first step in the decay of eukaryotic mRNAs and is also used to silence certain maternal mRNAs translationally during oocyte maturation and early embryonic development. The sequence is that of Poly(A)-specific ribonuclease PARN (parn) from Danio rerio (Zebrafish).